The sequence spans 253 residues: RNA polymerase sigma factor SigI6 (253 aa).

A Polymerase core binding motif is present at residues 63–76; sequence EEYSVALLAFNEAI. Positions 203–222 form a DNA-binding region, H-T-H motif; the sequence is TLELLKLAKVSRRTIERNKK.

Belongs to the sigma-70 factor family. SigI subfamily. As to quaternary structure, interacts with RsgI6.

It is found in the cytoplasm. With respect to regulation, negatively regulated by the anti-sigma-I factor RsgI6. Binding of the polysaccharide substrate to RsgI6 may lead to the release and activation of SigI6. Sigma factors are initiation factors that promote the attachment of RNA polymerase to specific initiation sites and are then released. This sigma factor is involved in regulation of cellulosomal genes via an external polysaccharide-sensing mechanism. Recognizes the predicted promoters associated with sigI6 itself, xyn11B, xyn10D, xyn10Z, xyn10Y, cel9V, cseP, sigI1, cipA, and rsgI5. The sequence is that of RNA polymerase sigma factor SigI6 from Acetivibrio thermocellus (strain ATCC 27405 / DSM 1237 / JCM 9322 / NBRC 103400 / NCIMB 10682 / NRRL B-4536 / VPI 7372) (Clostridium thermocellum).